A 157-amino-acid polypeptide reads, in one-letter code: 2-C-methyl-D-erythritol 2,4-cyclodiphosphate synthase (157 aa).

D8 and H10 together coordinate a divalent metal cation. 4-CDP-2-C-methyl-D-erythritol 2-phosphate-binding positions include 8-10 and 34-35; these read DVH and HS. Position 42 (H42) interacts with a divalent metal cation. 4-CDP-2-C-methyl-D-erythritol 2-phosphate contacts are provided by residues 56-58, 61-65, 132-135, F139, and R142; these read DIG, FPDTD, and TTTE.

This sequence belongs to the IspF family. Homotrimer. The cofactor is a divalent metal cation.

The catalysed reaction is 4-CDP-2-C-methyl-D-erythritol 2-phosphate = 2-C-methyl-D-erythritol 2,4-cyclic diphosphate + CMP. Its pathway is isoprenoid biosynthesis; isopentenyl diphosphate biosynthesis via DXP pathway; isopentenyl diphosphate from 1-deoxy-D-xylulose 5-phosphate: step 4/6. Functionally, involved in the biosynthesis of isopentenyl diphosphate (IPP) and dimethylallyl diphosphate (DMAPP), two major building blocks of isoprenoid compounds. Catalyzes the conversion of 4-diphosphocytidyl-2-C-methyl-D-erythritol 2-phosphate (CDP-ME2P) to 2-C-methyl-D-erythritol 2,4-cyclodiphosphate (ME-CPP) with a corresponding release of cytidine 5-monophosphate (CMP). The polypeptide is 2-C-methyl-D-erythritol 2,4-cyclodiphosphate synthase (Geotalea uraniireducens (strain Rf4) (Geobacter uraniireducens)).